The following is a 649-amino-acid chain: MTHPNDHIDAMLHETRVIHPSAEFQAGTRVSRAEYERRYRQSLDQPDDFWSEVAHDLHWMKDWDRVLDWQEPHAQWFVGGQTNIAYNALDRNVQRGLGDKRAIIWEGEDGEVRTYTYAELLREVCKAANALEELGVVAGDRVTLYMPLIPEAAIAMLACARIGAVHSIVFGGFSVSALADRINNAQSKLLITADAGYRRGKPVTLKINADEAAKLAPCLEHVLVVKRAGIPLEWWTEGRDLWWHDVVDRQSDQHEATALDSEHPLFILYTSGSTGAPKGVQHTTGGYMVGTYLTTQTVFDLRDDDIYWCTADIGWITGHSYSVYGPLLNGATVVMYEGAPNQPDWGRFWDIVQKHRVTILYTAPTAIRSFMQHGDEIPGRYDLASLRLLGSVGEPINPEAWMWYYRVIGGERCPVVDTWWQTETGSIMLTTLPGAFPSKPGSAGLPMFGVEPALMTRDGEEIGDDDGGLLVIKRPWPSMLRTVYGDDERYRKSYWGEIPHVYFAGDGARRDHDGYYTIVGRVDDVLNVSGHRLGTMEIESALVAHPDVSEAAVVGRPDPVKGESVVAYVLLQDGHTADPAALRAHVSSEIGALARPDAIYIADALPKTRSGKIMRRFLRQLAAGQPVQGDTSTLEDPTVLERLQASPAL.

CoA is bound by residues 198-201 (RRGK), Thr317, and Asn341. ATP is bound by residues 393–395 (GEP), 417–422 (DTWWQT), Asp506, and Arg521. Residue Ser529 participates in CoA binding. Residue Arg532 coordinates ATP. The Mg(2+) site is built by Val543, His545, and Val548. Residue Lys612 is modified to N6-acetyllysine. The segment at 625 to 649 (QPVQGDTSTLEDPTVLERLQASPAL) is disordered.

It belongs to the ATP-dependent AMP-binding enzyme family. Mg(2+) serves as cofactor. In terms of processing, acetylated. Deacetylation by the SIR2-homolog deacetylase activates the enzyme.

The catalysed reaction is acetate + ATP + CoA = acetyl-CoA + AMP + diphosphate. Functionally, catalyzes the conversion of acetate into acetyl-CoA (AcCoA), an essential intermediate at the junction of anabolic and catabolic pathways. AcsA undergoes a two-step reaction. In the first half reaction, AcsA combines acetate with ATP to form acetyl-adenylate (AcAMP) intermediate. In the second half reaction, it can then transfer the acetyl group from AcAMP to the sulfhydryl group of CoA, forming the product AcCoA. The sequence is that of Acetyl-coenzyme A synthetase from Deinococcus radiodurans (strain ATCC 13939 / DSM 20539 / JCM 16871 / CCUG 27074 / LMG 4051 / NBRC 15346 / NCIMB 9279 / VKM B-1422 / R1).